The following is a 228-amino-acid chain: Protein ULTRAPETALA 2 (228 aa).

Residues 14–121 (EELQEISGVH…NKALKNSNVS (108 aa)) form the SAND domain.

In terms of tissue distribution, expressed in influorescence, pollen and siliques, with a higher expression in influorescence.

It localises to the cytoplasm. The protein localises to the nucleus. Putative transcription factor that acts as a key negative regulator of cell accumulation in shoot and floral meristems. Negatively regulates the size of the WUSCHEL (WUS)-expressing organizing center in inflorescence meristems. May act by down-regulating expression of WUS. Can compensate for mutant ULT1 protein when overexpressed. This chain is Protein ULTRAPETALA 2 (ULT2), found in Arabidopsis thaliana (Mouse-ear cress).